A 627-amino-acid polypeptide reads, in one-letter code: Ras and EF-hand domain-containing protein homolog (627 aa).

Positions Tyr55–Leu245 form a coiled coil. A phosphoserine mark is found at Ser266 and Ser272. Residues Ala438–Ser443, Asn541–Asp544, and Ala578–Lys579 each bind GTP.

Belongs to the small GTPase superfamily. Rab family. Homodimer. Interacts with the dynein-dynactin complex.

It localises to the cytoplasm. Its subcellular location is the perinuclear region. In terms of biological role, binds predominantly GDP, and also GTP. Acts as a dynein adapter protein that activates dynein-mediated transport and dynein-dynactin motility on microtubules. This chain is Ras and EF-hand domain-containing protein homolog (Rasef), found in Mus musculus (Mouse).